Consider the following 362-residue polypeptide: Cobalt-precorrin-5B C(1)-methyltransferase (362 aa).

This sequence belongs to the CbiD family.

It catalyses the reaction Co-precorrin-5B + S-adenosyl-L-methionine = Co-precorrin-6A + S-adenosyl-L-homocysteine. The protein operates within cofactor biosynthesis; adenosylcobalamin biosynthesis; cob(II)yrinate a,c-diamide from sirohydrochlorin (anaerobic route): step 6/10. Functionally, catalyzes the methylation of C-1 in cobalt-precorrin-5B to form cobalt-precorrin-6A. This is Cobalt-precorrin-5B C(1)-methyltransferase from Burkholderia cenocepacia (strain ATCC BAA-245 / DSM 16553 / LMG 16656 / NCTC 13227 / J2315 / CF5610) (Burkholderia cepacia (strain J2315)).